We begin with the raw amino-acid sequence, 180 residues long: Large ribosomal subunit protein uL5 (180 aa).

It belongs to the universal ribosomal protein uL5 family. As to quaternary structure, part of the 50S ribosomal subunit; part of the 5S rRNA/L5/L18/L25 subcomplex. Contacts the 5S rRNA and the P site tRNA. Forms a bridge to the 30S subunit in the 70S ribosome.

Functionally, this is one of the proteins that bind and probably mediate the attachment of the 5S RNA into the large ribosomal subunit, where it forms part of the central protuberance. In the 70S ribosome it contacts protein S13 of the 30S subunit (bridge B1b), connecting the 2 subunits; this bridge is implicated in subunit movement. Contacts the P site tRNA; the 5S rRNA and some of its associated proteins might help stabilize positioning of ribosome-bound tRNAs. The chain is Large ribosomal subunit protein uL5 from Leuconostoc citreum (strain KM20).